The chain runs to 359 residues: S-adenosylmethionine:tRNA ribosyltransferase-isomerase (359 aa).

Belongs to the QueA family. Monomer.

Its subcellular location is the cytoplasm. The enzyme catalyses 7-aminomethyl-7-carbaguanosine(34) in tRNA + S-adenosyl-L-methionine = epoxyqueuosine(34) in tRNA + adenine + L-methionine + 2 H(+). It participates in tRNA modification; tRNA-queuosine biosynthesis. Transfers and isomerizes the ribose moiety from AdoMet to the 7-aminomethyl group of 7-deazaguanine (preQ1-tRNA) to give epoxyqueuosine (oQ-tRNA). This chain is S-adenosylmethionine:tRNA ribosyltransferase-isomerase, found in Colwellia psychrerythraea (strain 34H / ATCC BAA-681) (Vibrio psychroerythus).